A 108-amino-acid polypeptide reads, in one-letter code: Alkyltransferase-like protein 1 (108 aa).

This sequence belongs to the MGMT family. ATL subfamily.

Functionally, involved in DNA damage recognition. Binds DNA containing O(6)-methylguanine and larger O(6)-alkylguanine adducts. The DNA is bent, the damaged base is rotated out of the DNA duplex into a hydrophobic binding pocket (nucleotide flipping), with Arg-39 donating a hydrogen bond to the orphaned cytosine to stabilize the extrahelical DNA conformation. This structural change in DNA presents the lesion to the nucleotide excision repair (NER) pathway. The affinity for O(6)-alkylguanine adducts increases with the size of the alkyl group. Low affinity small O(6)-alkylguanines are directed to the global genome repair pathway of NER via rhp7-rhp16 and rhp41-rhp23, while strong binding to bulky O(6)-alkylguanines stalls the transcription machinery and diverts the damage to the transcription-coupled repair pathway of NER via rhp26. This is Alkyltransferase-like protein 1 from Schizosaccharomyces pombe (strain 972 / ATCC 24843) (Fission yeast).